A 197-amino-acid chain; its full sequence is RNA pyrophosphohydrolase (197 aa).

The 144-residue stretch at 6–149 folds into the Nudix hydrolase domain; the sequence is GYRPNVGIVI…KRDVYRKAMK (144 aa). The Nudix box signature appears at 38–59; it reads GGINDGETPEQAMYRELYEEVG. Residues 165–197 form a disordered region; that stretch reads LSTNNNDEKKANYSAKKPYSPYRNQDKKRKTRV.

Belongs to the Nudix hydrolase family. RppH subfamily. A divalent metal cation serves as cofactor.

Its function is as follows. Accelerates the degradation of transcripts by removing pyrophosphate from the 5'-end of triphosphorylated RNA, leading to a more labile monophosphorylated state that can stimulate subsequent ribonuclease cleavage. In Mannheimia succiniciproducens (strain KCTC 0769BP / MBEL55E), this protein is RNA pyrophosphohydrolase.